The chain runs to 330 residues: Autoinducer 2 import system permease protein LsrD (330 aa).

The Cytoplasmic segment spans residues 1–4 (MRIR). Residues 5 to 25 (YGWELALAALLVIEIVAFGAI) form a helical membrane-spanning segment. Topologically, residues 26 to 42 (NPRMLDLNMLLFSTSDF) are periplasmic. Residues 43-63 (ICIGIVALPLTMVIVSGGIDI) form a helical membrane-spanning segment. Residues 64–67 (SFGS) are Cytoplasmic-facing. 2 helical membrane-spanning segments follow: residues 68 to 88 (TIGL…PMPL) and 89 to 109 (AILL…GLII). Residues 110 to 115 (YTKVNP) lie on the Cytoplasmic side of the membrane. Residues 116 to 136 (LVITLGTLYLFAGSALLLSGM) traverse the membrane as a helical segment. At 137-159 (AGATGYEGIGGFPMAFTDFANLD) the chain is on the periplasmic side. The helical transmembrane segment at 160–180 (VLGLPVPLIIFLICLLVFWLW) threads the bilayer. Topologically, residues 181–209 (LHKTHAGRNVFLIGQSPRVALYSAIPVNR) are cytoplasmic. A helical transmembrane segment spans residues 210–230 (TLCALYAMTGLASAVAAVLLV). Residues 231–237 (SYFGSAR) are Periplasmic-facing. Transmembrane regions (helical) follow at residues 238 to 258 (SDLG…GGAN) and 259 to 279 (IYGG…VGYL). The Periplasmic portion of the chain corresponds to 280–285 (QQGLQM). The chain crosses the membrane as a helical span at residues 286 to 306 (AGVPNQVSSALSGALLIVVVV). Topologically, residues 307 to 330 (GRSVSLHRQQIKEWLARRANNPLP) are cytoplasmic.

This sequence belongs to the binding-protein-dependent transport system permease family. AraH/RbsC subfamily. In terms of assembly, the complex is composed of two ATP-binding proteins (LsrA), two transmembrane proteins (LsrC and LsrD) and a solute-binding protein (LsrB).

The protein resides in the cell inner membrane. In terms of biological role, part of the ABC transporter complex LsrABCD involved in autoinducer 2 (AI-2) import. Probably responsible for the translocation of the substrate across the membrane. The sequence is that of Autoinducer 2 import system permease protein LsrD (lsrD) from Shigella flexneri serotype 5b (strain 8401).